The sequence spans 161 residues: ATP synthase subunit b (161 aa).

Residues 12–32 (IAFFLFVFFCMKYIWPNLISL) traverse the membrane as a helical segment.

It belongs to the ATPase B chain family. As to quaternary structure, F-type ATPases have 2 components, F(1) - the catalytic core - and F(0) - the membrane proton channel. F(1) has five subunits: alpha(3), beta(3), gamma(1), delta(1), epsilon(1). F(0) has three main subunits: a(1), b(2) and c(10-14). The alpha and beta chains form an alternating ring which encloses part of the gamma chain. F(1) is attached to F(0) by a central stalk formed by the gamma and epsilon chains, while a peripheral stalk is formed by the delta and b chains.

It is found in the cell membrane. Its function is as follows. F(1)F(0) ATP synthase produces ATP from ADP in the presence of a proton or sodium gradient. F-type ATPases consist of two structural domains, F(1) containing the extramembraneous catalytic core and F(0) containing the membrane proton channel, linked together by a central stalk and a peripheral stalk. During catalysis, ATP synthesis in the catalytic domain of F(1) is coupled via a rotary mechanism of the central stalk subunits to proton translocation. Functionally, component of the F(0) channel, it forms part of the peripheral stalk, linking F(1) to F(0). This Wigglesworthia glossinidia brevipalpis protein is ATP synthase subunit b.